The chain runs to 344 residues: GTP 3',8-cyclase (344 aa).

The Radical SAM core domain maps to 19–244 (PFARPITYLR…TPLAERTGGP (226 aa)). A GTP-binding site is contributed by Arg-28. [4Fe-4S] cluster-binding residues include Cys-35 and Cys-39. Tyr-41 lines the S-adenosyl-L-methionine pocket. A [4Fe-4S] cluster-binding site is contributed by Cys-42. GTP is bound at residue Arg-77. An S-adenosyl-L-methionine-binding site is contributed by Gly-81. Residue Thr-110 coordinates GTP. Position 134 (Ser-134) interacts with S-adenosyl-L-methionine. Lys-170 is a GTP binding site. Met-204 is a binding site for S-adenosyl-L-methionine. Residues Cys-268 and Cys-271 each coordinate [4Fe-4S] cluster. 273 to 275 (RVR) contacts GTP. Cys-285 serves as a coordination point for [4Fe-4S] cluster.

It belongs to the radical SAM superfamily. MoaA family. Monomer and homodimer. The cofactor is [4Fe-4S] cluster.

The catalysed reaction is GTP + AH2 + S-adenosyl-L-methionine = (8S)-3',8-cyclo-7,8-dihydroguanosine 5'-triphosphate + 5'-deoxyadenosine + L-methionine + A + H(+). Its pathway is cofactor biosynthesis; molybdopterin biosynthesis. Catalyzes the cyclization of GTP to (8S)-3',8-cyclo-7,8-dihydroguanosine 5'-triphosphate. In Paracoccus denitrificans (strain Pd 1222), this protein is GTP 3',8-cyclase.